The primary structure comprises 500 residues: Glutamate--tRNA ligase (500 aa).

Residues 12-22 (PSPTGHLHIGN) carry the 'HIGH' region motif. A 'KMSKS' region motif is present at residues 259–263 (KLSKR). Lys-262 serves as a coordination point for ATP.

It belongs to the class-I aminoacyl-tRNA synthetase family. Glutamate--tRNA ligase type 1 subfamily. In terms of assembly, monomer.

The protein resides in the cytoplasm. The enzyme catalyses tRNA(Glu) + L-glutamate + ATP = L-glutamyl-tRNA(Glu) + AMP + diphosphate. Functionally, catalyzes the attachment of glutamate to tRNA(Glu) in a two-step reaction: glutamate is first activated by ATP to form Glu-AMP and then transferred to the acceptor end of tRNA(Glu). This is Glutamate--tRNA ligase from Lactobacillus delbrueckii subsp. bulgaricus (strain ATCC 11842 / DSM 20081 / BCRC 10696 / JCM 1002 / NBRC 13953 / NCIMB 11778 / NCTC 12712 / WDCM 00102 / Lb 14).